Reading from the N-terminus, the 114-residue chain is uncharacterized protein (114 aa).

The protein to M.kandleri MK0008.

This is an uncharacterized protein from Methanocaldococcus jannaschii (strain ATCC 43067 / DSM 2661 / JAL-1 / JCM 10045 / NBRC 100440) (Methanococcus jannaschii).